The primary structure comprises 493 residues: Probable cytosol aminopeptidase (493 aa).

2 residues coordinate Mn(2+): lysine 265 and aspartate 270. Lysine 277 is an active-site residue. Mn(2+) contacts are provided by aspartate 288, aspartate 347, and glutamate 349. The active site involves arginine 351.

The protein belongs to the peptidase M17 family. Requires Mn(2+) as cofactor.

It is found in the cytoplasm. It catalyses the reaction Release of an N-terminal amino acid, Xaa-|-Yaa-, in which Xaa is preferably Leu, but may be other amino acids including Pro although not Arg or Lys, and Yaa may be Pro. Amino acid amides and methyl esters are also readily hydrolyzed, but rates on arylamides are exceedingly low.. The catalysed reaction is Release of an N-terminal amino acid, preferentially leucine, but not glutamic or aspartic acids.. Functionally, presumably involved in the processing and regular turnover of intracellular proteins. Catalyzes the removal of unsubstituted N-terminal amino acids from various peptides. This Hydrogenovibrio crunogenus (strain DSM 25203 / XCL-2) (Thiomicrospira crunogena) protein is Probable cytosol aminopeptidase.